The chain runs to 319 residues: Tetrahydromethanopterin S-methyltransferase subunit H (319 aa).

The protein belongs to the MtrH family. As to quaternary structure, the complex is composed of 8 subunits; MtrA, MtrB, MtrC, MtrD, MtrE, MtrF, MtrG and MtrH.

The enzyme catalyses 5-methyl-5,6,7,8-tetrahydromethanopterin + coenzyme M + 2 Na(+)(in) = 5,6,7,8-tetrahydromethanopterin + methyl-coenzyme M + 2 Na(+)(out). It participates in one-carbon metabolism; methanogenesis from CO(2); methyl-coenzyme M from 5,10-methylene-5,6,7,8-tetrahydromethanopterin: step 2/2. In terms of biological role, part of a complex that catalyzes the formation of methyl-coenzyme M and tetrahydromethanopterin from coenzyme M and methyl-tetrahydromethanopterin. This is an energy-conserving, sodium-ion translocating step. MtrH catalyzes the transfer of the methyl group from methyl-tetrahydromethanopterin to the corrinoid prosthetic group of MtrA. This Methanococcus vannielii (strain ATCC 35089 / DSM 1224 / JCM 13029 / OCM 148 / SB) protein is Tetrahydromethanopterin S-methyltransferase subunit H.